Consider the following 115-residue polypeptide: UPF0102 protein SYO3AOP1_0546 (115 aa).

This sequence belongs to the UPF0102 family.

This is UPF0102 protein SYO3AOP1_0546 from Sulfurihydrogenibium sp. (strain YO3AOP1).